Consider the following 297-residue polypeptide: Glycerol-3-phosphate dehydrogenase [NAD(P)+] (297 aa).

NADPH is bound by residues Trp11, Arg33, and Lys79. Residues Lys79, Gly107, and Ser109 each contribute to the sn-glycerol 3-phosphate site. Ala111 lines the NADPH pocket. 5 residues coordinate sn-glycerol 3-phosphate: Lys161, Asp214, Ser224, Arg225, and Asn226. The Proton acceptor role is filled by Lys161. Arg225 contributes to the NADPH binding site. Residues Val249 and Glu251 each coordinate NADPH.

Belongs to the NAD-dependent glycerol-3-phosphate dehydrogenase family.

It localises to the cytoplasm. It catalyses the reaction sn-glycerol 3-phosphate + NAD(+) = dihydroxyacetone phosphate + NADH + H(+). It carries out the reaction sn-glycerol 3-phosphate + NADP(+) = dihydroxyacetone phosphate + NADPH + H(+). It functions in the pathway membrane lipid metabolism; glycerophospholipid metabolism. In terms of biological role, catalyzes the reduction of the glycolytic intermediate dihydroxyacetone phosphate (DHAP) to sn-glycerol 3-phosphate (G3P), the key precursor for phospholipid synthesis. The polypeptide is Glycerol-3-phosphate dehydrogenase [NAD(P)+] (Campylobacter jejuni subsp. jejuni serotype O:23/36 (strain 81-176)).